A 212-amino-acid chain; its full sequence is Response regulator SsrB (212 aa).

Residues 1-138 (MKEYKILLVD…PTLNREAILA (138 aa)) are required for prevention of DNA binding in absence of phosphorylation and for full stimulation of activity by acidic pH. A Response regulatory domain is found at 5–121 (KILLVDDHEI…VLLAALQTVA (117 aa)). Aspartate 56 carries the post-translational modification 4-aspartylphosphate. In terms of domain architecture, HTH luxR-type spans 143–208 (DTTNHQLLTL…ELLNCARRMR (66 aa)). Residues 167–186 (NHGISEKLHISIKTVETHRM) constitute a DNA-binding region (H-T-H motif). Cysteine 203 bears the S-nitrosocysteine mark.

As to quaternary structure, homodimer; disulfide-linked; dimerizes upon DNA-binding. SsrB phosphorylated on Asp-56 activates the expression of virulence genes whereas the unphosphorylated form controls biofilm formation. Independently of SsrA, can be phosphorylated by small inorganic phosphate donors (such as acetyl phosphate or phosphoramidate). In terms of processing, disulfide bond formation at Cys-203 is not required for dimerization. Post-translationally, cys-203 may serve as a redox sensor that is nitrosylated in presence of reactive nitrogen species (RNS) generated by the host, the modification modulates its DNA-binding activity. Cys-203 is relatively resistant to oxidation by hydrogen peroxide.

The protein resides in the cytoplasm. In terms of biological role, member of the two-component regulatory system SsrA/SsrB (SpiR/SsrB) that is required for intracellular proliferation and systemic dissemination within the host. When inside acidic Salmonella-containing vesicles (SCV) within host cells the SsrA sensor kinase autophosphorylates and the phosphoryl group is transferred to the response regulator SsrB; phosphorylated SsrB activates the expression of genes encoding virulence proteins, including pathogenicity island 2 (SPI2) and other horizontally acquired genes, but also ancestral genes; it can stimulate gene expression both by recruiting RNA polymerase and by antagonizing the action of the transcriptional repressor hns (H-NS). Can also act independently of sensor kinase ssrA to support the dormant carrier state by directing the transcription of factors required for biofilm formation. DNA-binding is stimulated by acidic pH conditions, and binding promotes bending of DNA both upstream and downstream of binding sites. Binds a degenerate 18-basepair palindromic sequence with a 7-4-7 internal organization, and regulates gene expression from 86 operons. When phosphorylated, activates the transcription of the ABC transporter complex dalSTUV, which helps protect the organism from oxidative killing by host neutrophils. Binds the phoP promoter to stimulate expression in acidic pH conditions. Antagonizes hns to activate the transcription of ugtL. Following invasion of host cells, binds the hilD and hilA regulatory regions to repress their transcription and consequently to repress transcription of pathogenicity island 1 (SPI1) encoding genes involved in host cell invasion. Binds the promoters of the flagellar master regulators flhD and flhC to repress their expression and consequently to suppress flagellar motility and promote evasion of the host inflammasome during infection of host cells. Activates expression of sseI/srfH, sifA, sifB, sseJ and regulates its own expression. When unphosphorylated, relieves the hns-mediated repression of master biofilm regulator csgD by binding and bending the csgD regulatory region. May act as early as in the lumen of the host small intestine, to activate the expression of virulence proteins prior to invasion of host cells. This chain is Response regulator SsrB, found in Salmonella typhimurium (strain LT2 / SGSC1412 / ATCC 700720).